Reading from the N-terminus, the 354-residue chain is Ornithine transcarbamylase, mitochondrial (354 aa).

Residues 1–32 (MLSNLRILLNKAALRKAHTSMVRNFRYGKPVQ) constitute a mitochondrion transit peptide. An N6-acetyllysine; alternate modification is found at Lys-70. The residue at position 70 (Lys-70) is an N6-succinyllysine; alternate. N6-succinyllysine is present on Lys-80. The residue at position 88 (Lys-88) is an N6-acetyllysine; alternate. The residue at position 88 (Lys-88) is an N6-succinyllysine; alternate. 90 to 93 (STRT) is a binding site for carbamoyl phosphate. Ser-133 is subject to Phosphoserine. Position 141 (Arg-141) interacts with carbamoyl phosphate. Lys-144 is modified (N6-acetyllysine; alternate). N6-succinyllysine; alternate is present on Lys-144. His-168 and Gln-171 together coordinate carbamoyl phosphate. An L-ornithine-binding site is contributed by Asn-199. N6-acetyllysine; alternate occurs at positions 221, 231, and 238. Residues Lys-221, Lys-231, and Lys-238 each carry the N6-succinyllysine; alternate modification. L-ornithine-binding residues include Asp-263, Ser-267, and Met-268. An N6-succinyllysine mark is found at Lys-274 and Lys-289. Position 292 is an N6-acetyllysine; alternate (Lys-292). Lys-292 is modified (N6-succinyllysine; alternate). The Proton acceptor role is filled by Cys-303. Residue 303–304 (CL) participates in carbamoyl phosphate binding. Lys-307 bears the N6-acetyllysine; alternate mark. Lys-307 carries the N6-succinyllysine; alternate modification. A carbamoyl phosphate-binding site is contributed by Arg-330.

The protein belongs to the aspartate/ornithine carbamoyltransferase superfamily. OTCase family. As to quaternary structure, homotrimer. In terms of processing, acetylation at Lys-88 negatively regulates ornithine carbamoyltransferase activity in response to nutrient signals.

It localises to the mitochondrion matrix. The catalysed reaction is carbamoyl phosphate + L-ornithine = L-citrulline + phosphate + H(+). It participates in nitrogen metabolism; urea cycle; L-citrulline from L-ornithine and carbamoyl phosphate: step 1/1. Negatively regulated by lysine acetylation. Its function is as follows. Catalyzes the second step of the urea cycle, the condensation of carbamoyl phosphate with L-ornithine to form L-citrulline. The urea cycle ensures the detoxification of ammonia by converting it to urea for excretion. The sequence is that of Ornithine transcarbamylase, mitochondrial from Rattus norvegicus (Rat).